We begin with the raw amino-acid sequence, 309 residues long: Olfactory receptor 10J5 (309 aa).

Topologically, residues Met-1–Ile-25 are extracellular. Residue Asn-5 is glycosylated (N-linked (GlcNAc...) asparagine). The chain crosses the membrane as a helical span at residues Thr-26–Val-46. At Thr-47–His-54 the chain is on the cytoplasmic side. Residues Leu-55–Leu-75 traverse the membrane as a helical segment. Residues Val-76–Thr-99 are Extracellular-facing. A disulfide bridge connects residues Cys-97 and Cys-188. A helical membrane pass occupies residues Gln-100–Tyr-120. At Asp-121–Gly-139 the chain is on the cytoplasmic side. A helical membrane pass occupies residues Leu-140 to Val-160. Residues Thr-161–Ile-196 are Extracellular-facing. Residues Ile-197–Ser-216 traverse the membrane as a helical segment. Residues Tyr-217–Thr-236 are Cytoplasmic-facing. A helical transmembrane segment spans residues Phe-237–Ala-257. Over Tyr-258–Asp-270 the chain is Extracellular. A helical membrane pass occupies residues Leu-271 to Leu-291. Over Arg-292–Ser-309 the chain is Cytoplasmic.

It belongs to the G-protein coupled receptor 1 family. As to expression, expressed in both the aorta, the coronary artery and umbilical vein endothelial cells (HUVECs) (at protein level).

The protein localises to the cell membrane. Its function is as follows. Olfactory receptor. Activated by the synthetic floral odorant, lyral, and by alpha-cedrene, a sesquiterpene constituent of cedarwood oil. Its activation increases intracellular Ca(2+). Acts as a key regulator of myogenesis through its actions on cell migration and adhesion by activating the Ca(2+)-dependent AKT signal transduction pathway. Also acts as a regulator of angiogenesis. Moreover, plays a role in the regulation of lipid accumulation in hepatocytes via the cAMP-PKA pathway. May be involved in sperm chemotaxis and motility. This Homo sapiens (Human) protein is Olfactory receptor 10J5.